The following is a 348-amino-acid chain: Abnormal cell lineage protein 44 (348 aa).

A signal peptide spans 1-25 (MRAAPFDFFFQSTALSTFFILCSLA). 11 cysteine pairs are disulfide-bonded: cysteine 91–cysteine 102, cysteine 141–cysteine 149, cysteine 151–cysteine 165, cysteine 213–cysteine 227, cysteine 215–cysteine 222, cysteine 272–cysteine 299, cysteine 282–cysteine 294, cysteine 298–cysteine 338, cysteine 314–cysteine 329, cysteine 316–cysteine 326, and cysteine 321–cysteine 322. Serine 219 carries O-palmitoleoyl serine; by mom-1 lipidation. Residue asparagine 286 is glycosylated (N-linked (GlcNAc...) asparagine).

This sequence belongs to the Wnt family. Palmitoleoylation is required for efficient binding to frizzled receptors. Depalmitoleoylation leads to Wnt signaling pathway inhibition. Expressed in the tail hypodermis.

Its subcellular location is the secreted. The protein resides in the extracellular space. It localises to the extracellular matrix. Functionally, ligand for members of the frizzled family of seven transmembrane receptors. Affects male tail development, vulval precursor cell specification and egg laying. Involved in morphogenesis by influencing polarity of asymmetric cell divisions of the B, U, and F cells in the male, and the T cell in males and hermaphrodites. Controls spindle orientation in B-gamma cell division during male copulatory spicule development. Involved in specification of the P7.p lineage during vulval development. Has a role in providing polarity and default lin-17 localization in axon development and positioning of neuromuscular synapses in DA9 regions by negatively regulating synaptogenesis. Plays a role in motorneuron development by promoting the extension of the anterior neurite of ventral D-type GABAergic motorneurons along the anterior-posterior axis of the ventral nerve cord. Positively regulates cilium position and dendrite morphogenesis in postembryonic PQR gas-sensing neurons. This is likely through regulating the localization of grdn-1 to the distal dendrites of PQR sensory neurons. This is Abnormal cell lineage protein 44 from Caenorhabditis elegans.